We begin with the raw amino-acid sequence, 416 residues long: Squalene synthase (416 aa).

NADP(+) contacts are provided by R52 and R77. 3 residues coordinate Mg(2+): D80, E83, and D84. R218 serves as a coordination point for NADP(+). Residues 284-304 form a helical membrane-spanning segment; sequence SVFNFCAIPQVMAIATLAACY. Positions 315 and 317 each coordinate NADP(+). A helical transmembrane segment spans residues 384–404; that stretch reads PIYLSFIMLLAALSWQYLSTL.

Belongs to the phytoene/squalene synthase family. It depends on Mg(2+) as a cofactor.

The protein resides in the endoplasmic reticulum membrane. It catalyses the reaction 2 (2E,6E)-farnesyl diphosphate + NADPH + H(+) = squalene + 2 diphosphate + NADP(+). The enzyme catalyses 2 (2E,6E)-farnesyl diphosphate + NADH + H(+) = squalene + 2 diphosphate + NAD(+). It carries out the reaction presqualene diphosphate + NADH + H(+) = squalene + diphosphate + NAD(+). The catalysed reaction is presqualene diphosphate + NADPH + H(+) = squalene + diphosphate + NADP(+). It catalyses the reaction 2 (2E,6E)-farnesyl diphosphate = presqualene diphosphate + diphosphate. It functions in the pathway terpene metabolism; lanosterol biosynthesis; lanosterol from farnesyl diphosphate: step 1/3. In terms of biological role, catalyzes the condensation of 2 farnesyl pyrophosphate (FPP) moieties to form squalene. Proceeds in two distinct steps. In the first half-reaction, two molecules of FPP react to form the stable presqualene diphosphate intermediate (PSQPP), with concomitant release of a proton and a molecule of inorganic diphosphate. In the second half-reaction, PSQPP undergoes heterolysis, isomerization, and reduction with NADPH or NADH to form squalene. It is the first committed enzyme of the sterol biosynthesis pathway. The polypeptide is Squalene synthase (Fdft1) (Rattus norvegicus (Rat)).